Reading from the N-terminus, the 1015-residue chain is Beta-galactosidase (1015 aa).

Glu-434 (proton donor) is an active-site residue. Residue Glu-513 is the Nucleophile of the active site.

This sequence belongs to the glycosyl hydrolase 2 family. It depends on Mg(2+) as a cofactor. The cofactor is Mn(2+).

It catalyses the reaction Hydrolysis of terminal non-reducing beta-D-galactose residues in beta-D-galactosides.. The chain is Beta-galactosidase (lacZ) from Arthrobacter sp. (strain B7).